Here is a 115-residue protein sequence, read N- to C-terminus: DNA repair protein homolog YozK (115 aa).

The UmuC domain maps to 12–115 (ILCVDMKSFY…EKCVHTYSID (104 aa)). Positions 16 and 115 each coordinate Mg(2+).

Belongs to the DNA polymerase type-Y family. Mg(2+) serves as cofactor.

The polypeptide is DNA repair protein homolog YozK (yozK) (Bacillus subtilis (strain 168)).